A 599-amino-acid chain; its full sequence is Aspartate--tRNA(Asp/Asn) ligase (599 aa).

Glu-173 provides a ligand contact to L-aspartate. Residues 197–200 (QLFK) are aspartate. Arg-219 serves as a coordination point for L-aspartate. Residues 219–221 (RDE) and Gln-228 contribute to the ATP site. His-449 lines the L-aspartate pocket. Glu-482 is an ATP binding site. An L-aspartate-binding site is contributed by Arg-489. 534 to 537 (GLDR) lines the ATP pocket.

The protein belongs to the class-II aminoacyl-tRNA synthetase family. Type 1 subfamily. As to quaternary structure, homodimer.

It is found in the cytoplasm. The enzyme catalyses tRNA(Asx) + L-aspartate + ATP = L-aspartyl-tRNA(Asx) + AMP + diphosphate. Functionally, aspartyl-tRNA synthetase with relaxed tRNA specificity since it is able to aspartylate not only its cognate tRNA(Asp) but also tRNA(Asn). Reaction proceeds in two steps: L-aspartate is first activated by ATP to form Asp-AMP and then transferred to the acceptor end of tRNA(Asp/Asn). The polypeptide is Aspartate--tRNA(Asp/Asn) ligase (Marinobacter nauticus (strain ATCC 700491 / DSM 11845 / VT8) (Marinobacter aquaeolei)).